A 1005-amino-acid polypeptide reads, in one-letter code: Ephrin type-A receptor 8 (1005 aa).

Residues 1-27 form the signal peptide; sequence MAPARGRLPPALWVVTAAAAAATCVSA. Topologically, residues 28 to 542 are extracellular; sequence ARGEVNLLDT…KPRPRYDTRT (515 aa). In terms of domain architecture, Eph LBD spans 31–209; the sequence is EVNLLDTSTI…YYKKCPAMVR (179 aa). 2 Fibronectin type-III domains span residues 328–438 and 439–534; these read PPSA…TNQA and APSQ…TGKP. N-linked (GlcNAc...) asparagine glycans are attached at residues N340, N407, and N432. A helical transmembrane segment spans residues 543-563; it reads IVWICLTLITGLVVLLLLLIC. The interval 564-570 is mediates interaction with ANKS1A and ANKS1B; it reads KKRHCGY. Residues 564-1005 lie on the Cytoplasmic side of the membrane; sequence KKRHCGYSKA…TSTQGPRRHL (442 aa). The interval 589-644 is mediates interaction with PIK3CG and required for endocytosis; that stretch reads APPPVFLPLHHPPGKLPEPQFYAEPHTYEEPGRAGRSFTREIEASRIHIEKIIGSG. Position 616 is a phosphotyrosine; by autocatalysis (Y616). Residues 635 to 896 enclose the Protein kinase domain; that stretch reads IHIEKIIGSG…QIVSVLDALI (262 aa). ATP contacts are provided by residues 641 to 649 and K667; that span reads IGSGDSGEV. D760 serves as the catalytic Proton acceptor. Phosphotyrosine; by autocatalysis is present on Y839. Positions 930–994 constitute an SAM domain; it reads GGGLTVGDWL…LGSIQTMRAQ (65 aa). A PDZ-binding motif is present at residues 1003 to 1005; sequence RHL.

The protein belongs to the protein kinase superfamily. Tyr protein kinase family. Ephrin receptor subfamily. As to quaternary structure, heterotetramer upon binding of the ligand. The heterotetramer is composed of an ephrin dimer and a receptor dimer. Oligomerization is probably required to induce biological responses. May also form heterodimers with other ephrin receptors. Interacts with FYN; possible downstream effector of EPHA8 in regulation of cell adhesion. Interacts with PIK3CG; regulates integrin-mediated cell adhesion to substrate. Interacts with TIAM1; regulates clathrin-mediated endocytosis of EPHA8. Interacts with ANKS1A and ANKS1B; EPHA8 kinase activity-independent but stimulated by EPHA8 ubiquitination. Post-translationally, phosphorylated. Phosphorylation is stimulated upon binding of its ligands including EFNA2, EFNA3 and EFNA5. Autophosphorylation on Tyr-616 is critical for association with FYN. Autophosphorylation on Tyr-839 modulates tyrosine kinase activity. In terms of processing, ubiquitinated. Ubiquitination by CBL regulates the receptor stability and activity through proteasomal degradation. ANKS1A prevents ubiquitination and degradation.

It is found in the cell membrane. It localises to the cell projection. Its subcellular location is the early endosome membrane. The enzyme catalyses L-tyrosyl-[protein] + ATP = O-phospho-L-tyrosyl-[protein] + ADP + H(+). Functionally, receptor tyrosine kinase which binds promiscuously GPI-anchored ephrin-A family ligands residing on adjacent cells, leading to contact-dependent bidirectional signaling into neighboring cells. The signaling pathway downstream of the receptor is referred to as forward signaling while the signaling pathway downstream of the ephrin ligand is referred to as reverse signaling. The GPI-anchored ephrin-A EFNA2, EFNA3, and EFNA5 are able to activate EPHA8 through phosphorylation. With EFNA5 may regulate integrin-mediated cell adhesion and migration on fibronectin substrate but also neurite outgrowth. During development of the nervous system also plays a role in axon guidance. Downstream effectors of the EPHA8 signaling pathway include FYN which promotes cell adhesion upon activation by EPHA8 and the MAP kinases in the stimulation of neurite outgrowth. This Homo sapiens (Human) protein is Ephrin type-A receptor 8 (EPHA8).